Here is a 150-residue protein sequence, read N- to C-terminus: Putative pre-16S rRNA nuclease (150 aa).

It belongs to the YqgF nuclease family.

It localises to the cytoplasm. Could be a nuclease involved in processing of the 5'-end of pre-16S rRNA. This chain is Putative pre-16S rRNA nuclease, found in Chlamydia felis (strain Fe/C-56) (Chlamydophila felis).